The primary structure comprises 510 residues: Glycerol kinase (510 aa).

ADP is bound at residue Thr13. ATP is bound by residues Thr13 and Thr14. Position 13 (Thr13) interacts with sn-glycerol 3-phosphate. Residue Arg17 coordinates ADP. Residues Arg83, Glu84, Tyr135, and Asp255 each coordinate sn-glycerol 3-phosphate. Residues Arg83, Glu84, Tyr135, Asp255, and Gln256 each contribute to the glycerol site. Residues Thr277, Gly321, Gly421, and Asn425 each coordinate ADP. Positions 277, 321, and 421 each coordinate ATP.

This sequence belongs to the FGGY kinase family.

It catalyses the reaction glycerol + ATP = sn-glycerol 3-phosphate + ADP + H(+). It participates in polyol metabolism; glycerol degradation via glycerol kinase pathway; sn-glycerol 3-phosphate from glycerol: step 1/1. Key enzyme in the regulation of glycerol uptake and metabolism. Catalyzes the phosphorylation of glycerol to yield sn-glycerol 3-phosphate. The chain is Glycerol kinase from Haloarcula marismortui (strain ATCC 43049 / DSM 3752 / JCM 8966 / VKM B-1809) (Halobacterium marismortui).